Reading from the N-terminus, the 346-residue chain is Methylthioribose-1-phosphate isomerase (346 aa).

Substrate contacts are provided by residues 54 to 56 (RGA), R91, and Q192. D233 serves as the catalytic Proton donor. 243 to 244 (NK) lines the substrate pocket.

It belongs to the eIF-2B alpha/beta/delta subunits family. MtnA subfamily.

It carries out the reaction 5-(methylsulfanyl)-alpha-D-ribose 1-phosphate = 5-(methylsulfanyl)-D-ribulose 1-phosphate. Its pathway is amino-acid biosynthesis; L-methionine biosynthesis via salvage pathway; L-methionine from S-methyl-5-thio-alpha-D-ribose 1-phosphate: step 1/6. Its function is as follows. Catalyzes the interconversion of methylthioribose-1-phosphate (MTR-1-P) into methylthioribulose-1-phosphate (MTRu-1-P). This is Methylthioribose-1-phosphate isomerase from Yersinia pseudotuberculosis serotype O:1b (strain IP 31758).